Consider the following 260-residue polypeptide: Indole-3-glycerol phosphate synthase (260 aa).

Belongs to the TrpC family.

It catalyses the reaction 1-(2-carboxyphenylamino)-1-deoxy-D-ribulose 5-phosphate + H(+) = (1S,2R)-1-C-(indol-3-yl)glycerol 3-phosphate + CO2 + H2O. It participates in amino-acid biosynthesis; L-tryptophan biosynthesis; L-tryptophan from chorismate: step 4/5. In Leifsonia xyli subsp. xyli (strain CTCB07), this protein is Indole-3-glycerol phosphate synthase.